The following is a 575-amino-acid chain: G2/mitotic-specific cyclin-B3 (575 aa).

Residues 75–83 carry the D-box motif; the sequence is RSALGNLTN. Residue Ser215 is modified to Phosphoserine.

The protein belongs to the cyclin family. Cyclin AB subfamily. As to quaternary structure, interacts with Cdk1 kinase. Ubiquitinated. Ubiquitination leads to its degradation in early anaphase. In embryo, it is expressed in all mitotically proliferating cells, with a high level in neuroblasts. Not expressed in old embryos and thereafter. Not expressed in endoreplicating tissues.

It is found in the nucleus. Its function is as follows. Cyclins are positive regulatory subunits of the cyclin-dependent kinases (CDKs), and thereby play an essential role in the control of the cell cycle, notably via their destruction during cell division. Probably functions redundantly with other cyclins in regulation of cell cycle. Its presence may be required to delay a deadline for completing cytokinesis that is ordinary imposed by nuclear envelope reformation. Degradation of CycB and CycB3 promote cytokinesis furrow initiation and ingression. Required with CycB for female fertility. The chain is G2/mitotic-specific cyclin-B3 (CycB3) from Drosophila melanogaster (Fruit fly).